The sequence spans 162 residues: Lipoprotein signal peptidase (162 aa).

2 helical membrane passes run 66 to 86 (PFFIAVTLVAMAAIAITFRKL) and 92 to 112 (LAAVSLSLIFSGAVGNLIDRV). Active-site residues include aspartate 119 and aspartate 137. A helical membrane pass occupies residues 132–152 (AFNVADSAICVGVALLALDMI).

It belongs to the peptidase A8 family.

It is found in the cell inner membrane. The enzyme catalyses Release of signal peptides from bacterial membrane prolipoproteins. Hydrolyzes -Xaa-Yaa-Zaa-|-(S,diacylglyceryl)Cys-, in which Xaa is hydrophobic (preferably Leu), and Yaa (Ala or Ser) and Zaa (Gly or Ala) have small, neutral side chains.. The protein operates within protein modification; lipoprotein biosynthesis (signal peptide cleavage). Functionally, this protein specifically catalyzes the removal of signal peptides from prolipoproteins. This is Lipoprotein signal peptidase from Geobacter metallireducens (strain ATCC 53774 / DSM 7210 / GS-15).